Reading from the N-terminus, the 156-residue chain is Small ribosomal subunit protein uS7 (156 aa).

It belongs to the universal ribosomal protein uS7 family. In terms of assembly, part of the 30S ribosomal subunit. Contacts proteins S9 and S11.

In terms of biological role, one of the primary rRNA binding proteins, it binds directly to 16S rRNA where it nucleates assembly of the head domain of the 30S subunit. Is located at the subunit interface close to the decoding center, probably blocks exit of the E-site tRNA. The sequence is that of Small ribosomal subunit protein uS7 from Phytoplasma mali (strain AT).